The following is a 316-amino-acid chain: MLEDSYLQLARTILEHGTYKDDRTGTGTYSVFGYQMRFDLSQGFPLLTTKKVPFGLIKSELLWFLHGDTNIQYLLQHHNHIWDEWAFKNWVTSADYDGPDMTNFEHRRLDDPDFAPIYQAQMQTFDDQILTDDAFAAKYGNLGDVYGAQWRHWQTRQGKTIDQIANVIEMIKTHPDSRRLIVSAWNPEDVPNMALPPCHTLFQFYVADGKLSCQLYQRSGDVFLGVPFNIASYALLTHLIAKETGLAVGEFVHTLGDAHIYTNHVEQVKTQLTRQPRPAPQLTLSGAHDSIFDYQMSDIKLSGYDPAPAIKAPVAI.

DUMP contacts are provided by residues arginine 23 and arginine 178–arginine 179. Residue cysteine 198 is the Nucleophile of the active site. DUMP is bound by residues arginine 218 to aspartate 221, asparagine 229, and histidine 259 to tyrosine 261. Aspartate 221 is a binding site for (6R)-5,10-methylene-5,6,7,8-tetrahydrofolate. Alanine 315 provides a ligand contact to (6R)-5,10-methylene-5,6,7,8-tetrahydrofolate.

Belongs to the thymidylate synthase family. Bacterial-type ThyA subfamily. In terms of assembly, homodimer.

It is found in the cytoplasm. The enzyme catalyses dUMP + (6R)-5,10-methylene-5,6,7,8-tetrahydrofolate = 7,8-dihydrofolate + dTMP. Its pathway is pyrimidine metabolism; dTTP biosynthesis. Catalyzes the reductive methylation of 2'-deoxyuridine-5'-monophosphate (dUMP) to 2'-deoxythymidine-5'-monophosphate (dTMP) while utilizing 5,10-methylenetetrahydrofolate (mTHF) as the methyl donor and reductant in the reaction, yielding dihydrofolate (DHF) as a by-product. This enzymatic reaction provides an intracellular de novo source of dTMP, an essential precursor for DNA biosynthesis. This Lactiplantibacillus plantarum (strain ATCC BAA-793 / NCIMB 8826 / WCFS1) (Lactobacillus plantarum) protein is Thymidylate synthase.